A 136-amino-acid chain; its full sequence is Cystatin-2 (136 aa).

Positions 1-24 are cleaved as a signal peptide; it reads MALLRGFLVCSLLLLSCICKEALG. Residues 29–124 form the Cystatin domain; sequence GGLENASPEE…CTFEVYNIPW (96 aa). Residues 73–77 carry the Secondary area of contact motif; it reads QIVSG. Disulfide bonds link Cys91–Cys101 and Cys115–Cys135.

Belongs to the cystatin family. Expressed by the venom gland.

It localises to the secreted. Its function is as follows. Inhibits various C1 cysteine proteases including cathepsin L, papain and cathepsin B. This protein has no toxic activity and its function in the venom is unknown. It may play a role as housekeeping or regulatory protein. The protein is Cystatin-2 of Crotalus adamanteus (Eastern diamondback rattlesnake).